The primary structure comprises 448 residues: uncharacterized protein (448 aa).

The residue at position 297 (Lys297) is an N6-(pyridoxal phosphate)lysine.

This sequence belongs to the class-III pyridoxal-phosphate-dependent aminotransferase family. The cofactor is pyridoxal 5'-phosphate.

This is an uncharacterized protein from Sinorhizobium fredii (strain NBRC 101917 / NGR234).